The chain runs to 388 residues: Na(+)/H(+) antiporter NhaA (388 aa).

The Cytoplasmic portion of the chain corresponds to 1–11 (MKHLHRFFSSD). The chain crosses the membrane as a helical span at residues 12-31 (ASGGIILIIAAILAMIMANS). The Periplasmic portion of the chain corresponds to 32–58 (GATSGWYHDFLETPVQLRVGSLEINKN). The chain crosses the membrane as a helical span at residues 59 to 80 (MLLWINDALMAVFFLLVGLEVK). Residues 81–96 (RELMQGSLASLRQAAF) lie on the Cytoplasmic side of the membrane. The chain crosses the membrane as a helical span at residues 97 to 116 (PVIAAIGGMIVPALLYLAFN). Over 117 to 122 (YADPIT) the chain is Periplasmic. The helical transmembrane segment at 123–130 (REGWAIPA) threads the bilayer. Residues 131 to 154 (ATDIAFALGVLALLGSRVPLALKI) are Cytoplasmic-facing. A helical transmembrane segment spans residues 155–176 (FLMALAIIDDLGAIIIIALFYT). Topologically, residues 177–180 (NDLS) are periplasmic. A helical transmembrane segment spans residues 181–200 (MASLGVAAVAIAVLAVLNLC). At 201–204 (GVRR) the chain is on the cytoplasmic side. Residues 205-222 (TGVYILVGVVLWTAVLKS) traverse the membrane as a helical segment. A topological domain (periplasmic) is located at residue glycine 223. A helical transmembrane segment spans residues 224–236 (VHATLAGVIVGFF). The Cytoplasmic segment spans residues 237–253 (IPLKEKHGRSPAKRLEH). A helical transmembrane segment spans residues 254 to 272 (VLHPWVAYLILPLFAFANA). Residues 273–286 (GVSLQGVTLDGLTS) are Periplasmic-facing. A helical transmembrane segment spans residues 287–310 (ILPLGIIAGLLIGKPLGISLFCWL). Residues 311-339 (ALRLKLAHLPEGTTYQQIMAVGILCGIGF) lie on the Cytoplasmic side of the membrane. The helical transmembrane segment at 340–350 (TMSIFIASLAF) threads the bilayer. Over 351 to 357 (GSVDPEL) the chain is Periplasmic. A helical membrane pass occupies residues 358–380 (INWAKLGILVGSISSAVIGYSWL). Residues 381-388 (RVRLRPSV) lie on the Cytoplasmic side of the membrane.

Belongs to the NhaA Na(+)/H(+) (TC 2.A.33) antiporter family.

The protein localises to the cell inner membrane. It carries out the reaction Na(+)(in) + 2 H(+)(out) = Na(+)(out) + 2 H(+)(in). Its function is as follows. Na(+)/H(+) antiporter that extrudes sodium in exchange for external protons. This chain is Na(+)/H(+) antiporter NhaA, found in Escherichia coli O9:H4 (strain HS).